The following is a 216-amino-acid chain: Uracil-DNA glycosylase (216 aa).

Residue aspartate 60 is the Proton acceptor of the active site.

Belongs to the uracil-DNA glycosylase (UDG) superfamily. UNG family.

The protein resides in the cytoplasm. It carries out the reaction Hydrolyzes single-stranded DNA or mismatched double-stranded DNA and polynucleotides, releasing free uracil.. In terms of biological role, excises uracil residues from the DNA which can arise as a result of misincorporation of dUMP residues by DNA polymerase or due to deamination of cytosine. This is Uracil-DNA glycosylase from Psychromonas ingrahamii (strain DSM 17664 / CCUG 51855 / 37).